A 948-amino-acid chain; its full sequence is Bifunctional glutamine synthetase adenylyltransferase/adenylyl-removing enzyme (948 aa).

The segment at 1–444 is adenylyl removase; it reads MSLPSALLPT…VFATLIGEED (444 aa). An adenylyl transferase region spans residues 452–948; sequence ARHFHELWDM…VIQAWQQWLG (497 aa).

It belongs to the GlnE family. Requires Mg(2+) as cofactor.

The catalysed reaction is [glutamine synthetase]-O(4)-(5'-adenylyl)-L-tyrosine + phosphate = [glutamine synthetase]-L-tyrosine + ADP. It carries out the reaction [glutamine synthetase]-L-tyrosine + ATP = [glutamine synthetase]-O(4)-(5'-adenylyl)-L-tyrosine + diphosphate. Its function is as follows. Involved in the regulation of glutamine synthetase GlnA, a key enzyme in the process to assimilate ammonia. When cellular nitrogen levels are high, the C-terminal adenylyl transferase (AT) inactivates GlnA by covalent transfer of an adenylyl group from ATP to specific tyrosine residue of GlnA, thus reducing its activity. Conversely, when nitrogen levels are low, the N-terminal adenylyl removase (AR) activates GlnA by removing the adenylyl group by phosphorolysis, increasing its activity. The regulatory region of GlnE binds the signal transduction protein PII (GlnB) which indicates the nitrogen status of the cell. The polypeptide is Bifunctional glutamine synthetase adenylyltransferase/adenylyl-removing enzyme (Vibrio cholerae serotype O1 (strain ATCC 39315 / El Tor Inaba N16961)).